A 207-amino-acid polypeptide reads, in one-letter code: Large ribosomal subunit protein uL4 (207 aa).

The interval 48–70 (KAQKTRSEVSGGGAKPWRQKGTG) is disordered.

It belongs to the universal ribosomal protein uL4 family. Part of the 50S ribosomal subunit.

In terms of biological role, one of the primary rRNA binding proteins, this protein initially binds near the 5'-end of the 23S rRNA. It is important during the early stages of 50S assembly. It makes multiple contacts with different domains of the 23S rRNA in the assembled 50S subunit and ribosome. Forms part of the polypeptide exit tunnel. In Francisella philomiragia subsp. philomiragia (strain ATCC 25017 / CCUG 19701 / FSC 153 / O#319-036), this protein is Large ribosomal subunit protein uL4.